A 286-amino-acid polypeptide reads, in one-letter code: MSLDAMKRKINSVQTTAKITNAMKLVATAKLKRQRDRLAAIKEYCHDYYDVIGLLLSVVDDVEFLKIPNAKDRTLYITINSTMGLAGSYNYNVNKLISKIVNETDITFTIGKKGHDFMRLSGRVDQVNTYLNLNDNDLTFDMSLQIAREALELYSQGEVNKICIIYTKFINAITFEVSVIDVLPFDKTALIKDHLAETIELAKDNIIFKPNKFELVKKILPTYIATVLYGSLIESKISENASRRNAMDAATKNAKALAENYKLIYNTLRQGKITREITEIVAGSDD.

It belongs to the ATPase gamma chain family. F-type ATPases have 2 components, CF(1) - the catalytic core - and CF(0) - the membrane proton channel. CF(1) has five subunits: alpha(3), beta(3), gamma(1), delta(1), epsilon(1). CF(0) has three main subunits: a, b and c.

Its subcellular location is the cell membrane. Its function is as follows. Produces ATP from ADP in the presence of a proton gradient across the membrane. The gamma chain is believed to be important in regulating ATPase activity and the flow of protons through the CF(0) complex. The polypeptide is ATP synthase gamma chain (Ureaplasma parvum serovar 3 (strain ATCC 27815 / 27 / NCTC 11736)).